A 71-amino-acid chain; its full sequence is Long neurotoxin 1 (71 aa).

Intrachain disulfides connect Cys3/Cys20, Cys14/Cys41, Cys26/Cys30, Cys45/Cys56, and Cys57/Cys62.

Belongs to the three-finger toxin family. Long-chain subfamily. Type II alpha-neurotoxin sub-subfamily. As to expression, expressed by the venom gland.

The protein localises to the secreted. In terms of biological role, binds with high affinity to muscular (alpha-1/CHRNA1) and neuronal (alpha-7/CHRNA7) nicotinic acetylcholine receptor (nAChR) and inhibits acetylcholine from binding to the receptor, thereby impairing neuromuscular and neuronal transmission. This chain is Long neurotoxin 1, found in Naja nivea (Cape cobra).